Consider the following 298-residue polypeptide: 4-hydroxy-tetrahydrodipicolinate synthase (298 aa).

Thr48 is a pyruvate binding site. Tyr137 acts as the Proton donor/acceptor in catalysis. Lys166 functions as the Schiff-base intermediate with substrate in the catalytic mechanism. Residue Ile207 coordinates pyruvate.

It belongs to the DapA family. Homotetramer; dimer of dimers.

It is found in the cytoplasm. It catalyses the reaction L-aspartate 4-semialdehyde + pyruvate = (2S,4S)-4-hydroxy-2,3,4,5-tetrahydrodipicolinate + H2O + H(+). Its pathway is amino-acid biosynthesis; L-lysine biosynthesis via DAP pathway; (S)-tetrahydrodipicolinate from L-aspartate: step 3/4. Its function is as follows. Catalyzes the condensation of (S)-aspartate-beta-semialdehyde [(S)-ASA] and pyruvate to 4-hydroxy-tetrahydrodipicolinate (HTPA). This is 4-hydroxy-tetrahydrodipicolinate synthase from Campylobacter jejuni subsp. jejuni serotype O:2 (strain ATCC 700819 / NCTC 11168).